A 413-amino-acid chain; its full sequence is Serine hydroxymethyltransferase (413 aa).

(6S)-5,6,7,8-tetrahydrofolate is bound by residues leucine 119 and 123 to 125 (GHL). Residue lysine 228 is modified to N6-(pyridoxal phosphate)lysine. Position 243 (glutamate 243) interacts with (6S)-5,6,7,8-tetrahydrofolate.

It belongs to the SHMT family. Homodimer. Requires pyridoxal 5'-phosphate as cofactor.

The protein resides in the cytoplasm. It carries out the reaction (6R)-5,10-methylene-5,6,7,8-tetrahydrofolate + glycine + H2O = (6S)-5,6,7,8-tetrahydrofolate + L-serine. The protein operates within one-carbon metabolism; tetrahydrofolate interconversion. It functions in the pathway amino-acid biosynthesis; glycine biosynthesis; glycine from L-serine: step 1/1. Its function is as follows. Catalyzes the reversible interconversion of serine and glycine with tetrahydrofolate (THF) serving as the one-carbon carrier. This reaction serves as the major source of one-carbon groups required for the biosynthesis of purines, thymidylate, methionine, and other important biomolecules. Also exhibits THF-independent aldolase activity toward beta-hydroxyamino acids, producing glycine and aldehydes, via a retro-aldol mechanism. The sequence is that of Serine hydroxymethyltransferase from Thermoanaerobacter pseudethanolicus (strain ATCC 33223 / 39E) (Clostridium thermohydrosulfuricum).